A 260-amino-acid polypeptide reads, in one-letter code: Cobalt transport protein CbiM (260 aa).

A signal peptide spans 1–34 (MKLGESMKKNATLSVKIIAFLGVLIFTVMPVANA). The next 6 helical transmembrane spans lie at 39–59 (EGYL…PFLI), 77–97 (LLFA…LPSF), 109–129 (LSTI…VLLF), 132–152 (LLLA…MAVM), 175–195 (IFFS…IQLG), and 215–235 (VFAI…VLIF).

Belongs to the CbiM family. In terms of assembly, forms an energy-coupling factor (ECF) transporter complex composed of an ATP-binding protein (A component, CbiO), a transmembrane protein (T component, CbiQ) and 2 possible substrate-capture proteins (S components, CbiM and CbiN) of unknown stoichimetry.

Its subcellular location is the cell membrane. It participates in cofactor biosynthesis; adenosylcobalamin biosynthesis. Part of the energy-coupling factor (ECF) transporter complex CbiMNOQ involved in cobalt import. This is Cobalt transport protein CbiM from Clostridium cellulovorans (strain ATCC 35296 / DSM 3052 / OCM 3 / 743B).